Here is a 72-residue protein sequence, read N- to C-terminus: Translation initiation factor IF-1 (72 aa).

An S1-like domain is found at 1–72; sequence MAKEDVIEVE…TRGRITYRYK (72 aa). A Phosphotyrosine modification is found at Tyr60.

Belongs to the IF-1 family. As to quaternary structure, component of the 30S ribosomal translation pre-initiation complex which assembles on the 30S ribosome in the order IF-2 and IF-3, IF-1 and N-formylmethionyl-tRNA(fMet); mRNA recruitment can occur at any time during PIC assembly.

The protein resides in the cytoplasm. Its function is as follows. One of the essential components for the initiation of protein synthesis. Stabilizes the binding of IF-2 and IF-3 on the 30S subunit to which N-formylmethionyl-tRNA(fMet) subsequently binds. Helps modulate mRNA selection, yielding the 30S pre-initiation complex (PIC). Upon addition of the 50S ribosomal subunit IF-1, IF-2 and IF-3 are released leaving the mature 70S translation initiation complex. The protein is Translation initiation factor IF-1 of Shouchella clausii (strain KSM-K16) (Alkalihalobacillus clausii).